Here is a 271-residue protein sequence, read N- to C-terminus: Centromere protein K (271 aa).

2 coiled-coil regions span residues 11–44 (DTITDVEAVIDTEEELIKECEEMWKDMEDCQNKL) and 102–151 (LRCD…VENQ).

Belongs to the CENP-K/MCM22 family. Component of the CENPA-CAD complex, composed of CENPI, CENPK, CENPL, CENPO, CENPP, CENPQ, CENPR and CENPS. The CENPA-CAD complex interacts with the CENPA-NAC complex, at least composed of CENPA, CENPC, CENPH, CENPM, CENPN, CENPT and CENPU. May interact with Sox6. Highly expressed in testis.

Its subcellular location is the nucleus. It is found in the chromosome. The protein localises to the centromere. It localises to the kinetochore. Component of the CENPA-CAD (nucleosome distal) complex, a complex recruited to centromeres which is involved in assembly of kinetochore proteins, mitotic progression and chromosome segregation. May be involved in incorporation of newly synthesized CENPA into centromeres via its interaction with the CENPA-NAC complex. Acts in coordination with KNL1 to recruit the NDC80 complex to the outer kinetochore. The chain is Centromere protein K (Cenpk) from Mus musculus (Mouse).